The sequence spans 337 residues: DNA-directed RNA polymerase subunit alpha (337 aa).

The interval 1–233 is alpha N-terminal domain (alpha-NTD); that stretch reads MVREKVKVST…NLFIPFLHVE (233 aa). The segment at 267–337 is alpha C-terminal domain (alpha-CTD); it reads LAFQYIFIDQ…IEKAFQKKID (71 aa).

It belongs to the RNA polymerase alpha chain family. As to quaternary structure, in plastids the minimal PEP RNA polymerase catalytic core is composed of four subunits: alpha, beta, beta', and beta''. When a (nuclear-encoded) sigma factor is associated with the core the holoenzyme is formed, which can initiate transcription.

It is found in the plastid. It localises to the chloroplast. It catalyses the reaction RNA(n) + a ribonucleoside 5'-triphosphate = RNA(n+1) + diphosphate. In terms of biological role, DNA-dependent RNA polymerase catalyzes the transcription of DNA into RNA using the four ribonucleoside triphosphates as substrates. This chain is DNA-directed RNA polymerase subunit alpha, found in Arabis hirsuta (Hairy rock-cress).